Here is a 132-residue protein sequence, read N- to C-terminus: Pro-MCH 1 (132 aa).

An N-terminal signal peptide occupies residues 1–24 (MRHSVLSISFAVALFLECYTPSTA). Residues Cys120 and Cys129 are joined by a disulfide bond.

The protein belongs to the melanin-concentrating hormone family. In terms of tissue distribution, pituitary gland. Produced in neurons of lateral basal hypothalamus which project both to the brain and to the neural lobe of the pituitary gland from where MCH is released.

Its function is as follows. Plays a role in skin pigmentation by antagonizing the action of melanotropin alpha. Induces melanin concentration within the melanophores. May participate in the control of the hypothalamo-pituitary adrenal gland axis by inhibiting the release of ACTH. The sequence is that of Pro-MCH 1 (mch1) from Oncorhynchus mykiss (Rainbow trout).